The sequence spans 121 residues: Large ribosomal subunit protein bL12 (121 aa).

It belongs to the bacterial ribosomal protein bL12 family. In terms of assembly, homodimer. Part of the ribosomal stalk of the 50S ribosomal subunit. Forms a multimeric L10(L12)X complex, where L10 forms an elongated spine to which 2 to 4 L12 dimers bind in a sequential fashion. Binds GTP-bound translation factors.

Functionally, forms part of the ribosomal stalk which helps the ribosome interact with GTP-bound translation factors. Is thus essential for accurate translation. In Shewanella baltica (strain OS223), this protein is Large ribosomal subunit protein bL12.